A 147-amino-acid chain; its full sequence is Antiholin-like protein LrgA (147 aa).

Transmembrane regions (helical) follow at residues 12 to 32, 35 to 55, 74 to 94, and 98 to 118; these read PAHFFHQVIVIALVLFVSKII, FMPIPMPASVIGLVLLFVLLC, NIGLLFVPAGISVVNSLGVIS, and FLIIGLIIVSTILLLICTGYV.

The protein belongs to the CidA/LrgA family. LrgA subfamily.

The protein resides in the cell membrane. Its function is as follows. Inhibits the expression or activity of extracellular murein hydrolases by interacting, possibly with LrgB, with the holin-like proteins CidA and/or CidB. The LrgAB and CidAB proteins may affect the proton motive force of the membrane. May be involved in programmed cell death (PCD), possibly triggering PCD in response to antibiotics and environmental stresses. This Staphylococcus aureus (strain USA300) protein is Antiholin-like protein LrgA.